Reading from the N-terminus, the 470-residue chain is MRAARCSIIRGAAGLRMASSVMSEMKEQMLKRSKVEKQTISELRKKHGDVKLSDASIDAAYCGMRGITGLVYEPSLLDPVEGIRFRNRTIPECQEVLPKAPNGCETLPEAMFWLLMTGEVPTAEQARALNAELHRRADPVAIAAAQKAIAALPASTHPMTAFSVGVLALQTYSKFAAAYATGKSNKTTYWEYALEDSLDMLARTPAVAAMIYNRVTKGRAEVAASSNSELDWAANFSNMLGFKDNEFWECMRLYLSIHVDHEGGNVSAHTTTLVASALSDPYLAFSAGLNGLAGPLHGLANQEVLKYLLSMQDRVKADGVNVCDEAALEVALTKYTWELLNSGQVVPGYGHAVLRKVDPRYTCLRNFCLRHHFEDDLFKLINIIYKIMPGILTEHGKTKNPYPNVDAHSGVLLQHYGLTEQDYYTVLFGLSRQMGVMAGVVWDRLQGRPLERPKSITTEMLAKKYLCTPR.

Catalysis depends on residues His-297, His-351, and Asp-406.

Belongs to the citrate synthase family. As to quaternary structure, homodimer.

The protein resides in the mitochondrion matrix. It catalyses the reaction oxaloacetate + acetyl-CoA + H2O = citrate + CoA + H(+). It functions in the pathway carbohydrate metabolism; tricarboxylic acid cycle; isocitrate from oxaloacetate: step 1/2. This Leishmania braziliensis protein is Probable citrate synthase, mitochondrial.